A 394-amino-acid polypeptide reads, in one-letter code: 8-amino-7-oxononanoate synthase (394 aa).

Arginine 21 contributes to the substrate binding site. 112–113 (GY) contributes to the pyridoxal 5'-phosphate binding site. Histidine 137 serves as a coordination point for substrate. 3 residues coordinate pyridoxal 5'-phosphate: serine 183, histidine 211, and threonine 239. Position 242 is an N6-(pyridoxal phosphate)lysine (lysine 242). Residue threonine 358 participates in substrate binding.

The protein belongs to the class-II pyridoxal-phosphate-dependent aminotransferase family. BioF subfamily. Homodimer. Pyridoxal 5'-phosphate is required as a cofactor.

It catalyses the reaction 6-carboxyhexanoyl-[ACP] + L-alanine + H(+) = (8S)-8-amino-7-oxononanoate + holo-[ACP] + CO2. Its pathway is cofactor biosynthesis; biotin biosynthesis. Functionally, catalyzes the decarboxylative condensation of pimeloyl-[acyl-carrier protein] and L-alanine to produce 8-amino-7-oxononanoate (AON), [acyl-carrier protein], and carbon dioxide. In Burkholderia cenocepacia (strain ATCC BAA-245 / DSM 16553 / LMG 16656 / NCTC 13227 / J2315 / CF5610) (Burkholderia cepacia (strain J2315)), this protein is 8-amino-7-oxononanoate synthase.